The primary structure comprises 220 residues: Protein-L-isoaspartate O-methyltransferase (220 aa).

S64 is a catalytic residue.

Belongs to the methyltransferase superfamily. L-isoaspartyl/D-aspartyl protein methyltransferase family.

The protein localises to the cytoplasm. The enzyme catalyses [protein]-L-isoaspartate + S-adenosyl-L-methionine = [protein]-L-isoaspartate alpha-methyl ester + S-adenosyl-L-homocysteine. Its function is as follows. Catalyzes the methyl esterification of L-isoaspartyl residues in peptides and proteins that result from spontaneous decomposition of normal L-aspartyl and L-asparaginyl residues. It plays a role in the repair and/or degradation of damaged proteins. This is Protein-L-isoaspartate O-methyltransferase from Thermococcus onnurineus (strain NA1).